A 142-amino-acid polypeptide reads, in one-letter code: Sorting nexin-3 (142 aa).

Residues 21 to 138 (NFLEIEVRNP…AAFVQDPNWD (118 aa)) form the PX domain. A 1,2-diacyl-sn-glycero-3-phospho-(1D-myo-inositol-3-phosphate)-binding residues include Arg64, Ser66, Lys90, Arg95, and Arg104.

Belongs to the sorting nexin family.

It is found in the cytoplasm. The protein localises to the golgi apparatus membrane. The protein resides in the prevacuolar compartment membrane. Required for retention of late Golgi membrane proteins. Component of the retrieval machinery that functions by direct interaction with the cytosolic tails of certain TGN membrane proteins during the sorting/budding process at the prevacuolar compartment. Binds phosphatidylinositol 3-phosphate (PtdIns(P3)). The sequence is that of Sorting nexin-3 (snx-3) from Neurospora crassa (strain ATCC 24698 / 74-OR23-1A / CBS 708.71 / DSM 1257 / FGSC 987).